A 48-amino-acid polypeptide reads, in one-letter code: Palustrin-3a (48 aa).

C43 and C48 form a disulfide bridge.

As to expression, expressed by the skin glands.

The protein localises to the secreted. In terms of biological role, antimicrobial activity against Gram-negative bacterium E.coli. This Lithobates palustris (Pickerel frog) protein is Palustrin-3a.